The sequence spans 152 residues: Large ribosomal subunit protein bL9 (152 aa).

The protein belongs to the bacterial ribosomal protein bL9 family.

In terms of biological role, binds to the 23S rRNA. This is Large ribosomal subunit protein bL9 from Nostoc punctiforme (strain ATCC 29133 / PCC 73102).